Reading from the N-terminus, the 639-residue chain is Protein argonaute (639 aa).

An N-terminal domain region spans residues 1-100; that stretch reads MYLNLYKIDI…YIKKLFLDND (100 aa). The segment at 101–153 is linker L1; it reads FYFKKGNNFISNSEVFSLDSNENVNAHLTYKIKIHNISNEYYLSILPKFTFLS. Positions 154–209 are PAZ domain; sequence KEPALESAIKSGYLYNIKSGKSFPYISGLDGILKIDIGNNQIVEVAYPENYLFNFT. Residues 210–292 are linker L2; the sequence is TRDAEKYGFS…KYSFYKNEQP (83 aa). Residues 293–424 form a mid domain region; it reads LKAIFFFSSK…YVYKMGNFIP (132 aa). The segment at 425–639 is PIWI domain; that stretch reads ECKPFILKKM…DYEWKLYIPY (215 aa). Active-site residues include Asp446, Glu482, Asp516, and Asn624. Residue Asp446 participates in Mn(2+) binding. The Mn(2+) site is built by Asp516 and Asn624.

Belongs to the argonaute family. Long pAgo subfamily. It depends on Mn(2+) as a cofactor.

The protein localises to the cytoplasm. An RNA-guided ssDNA endonuclease that may play a role in defense against invading mobile genetic elements. Uses short 5'-OH-ssRNA sequences as guides (gRNA) to bind complementary target DNA (tDNA) or target RNA resulting in target cleavage. The cleavage site is 10 nucleotides (nt) downstream of the target residue base-paired with the 5'-end of the gRNA. Reaction rates are fastest on 5'-OH-gRNA:tDNA followed by 5'-OH-gRNA:target RNA. gRNA between 17-21 nt supports equivalent rates of cleavage, has no preferred 5'-nt. Has weak activity on tDNA with 5'-phospho-gRNA, yielding products 1-2 nt longer. Unlike other characterized prokaryotic Ago proteins symmetric mismatches centered around the cleavage site reduce cleavage efficiency. This chain is Protein argonaute, found in Marinitoga piezophila (strain DSM 14283 / JCM 11233 / KA3).